We begin with the raw amino-acid sequence, 340 residues long: MNENLDPTTKGYNSEELDLEKRLRPLSFDDFAGQDQVLENLKVFVAAANQRGEALDHALFHGPPGLGKTTLANILANELEVGIKITSGPVLDKPGDLAGLLTNLDERDVLFIDEIHRLSPIVEEYLYSAMEDFKIDIMIESGPNARTVQINLNPFTLIGATTRSGLLTAPMRARFGISSRLQYYSTELLTTIVERSAGILKMPIDLEAAIEIAGRSRGTPRIANALLRRVRDFAQIKGNGTIDLEISKYALKALNVDAHGLDEMDNKILLTIINKFKGGPVGLSTLATAVSESSETIEEVYEPFLIQEGFIMRTPRGREVTEKAYKHLGKINTNIQGGLF.

The tract at residues 1 to 184 is large ATPase domain (RuvB-L); sequence MNENLDPTTK…FGISSRLQYY (184 aa). Residues Leu23, Arg24, Gly65, Lys68, Thr69, Thr70, 131–133, Arg174, Tyr184, and Arg221 contribute to the ATP site; that span reads EDF. Residue Thr69 coordinates Mg(2+). The interval 185-255 is small ATPAse domain (RuvB-S); that stretch reads STELLTTIVE…ISKYALKALN (71 aa). Positions 258–340 are head domain (RuvB-H); the sequence is AHGLDEMDNK…INTNIQGGLF (83 aa). DNA is bound by residues Arg313 and Arg318.

Belongs to the RuvB family. In terms of assembly, homohexamer. Forms an RuvA(8)-RuvB(12)-Holliday junction (HJ) complex. HJ DNA is sandwiched between 2 RuvA tetramers; dsDNA enters through RuvA and exits via RuvB. An RuvB hexamer assembles on each DNA strand where it exits the tetramer. Each RuvB hexamer is contacted by two RuvA subunits (via domain III) on 2 adjacent RuvB subunits; this complex drives branch migration. In the full resolvosome a probable DNA-RuvA(4)-RuvB(12)-RuvC(2) complex forms which resolves the HJ.

It localises to the cytoplasm. It catalyses the reaction ATP + H2O = ADP + phosphate + H(+). Functionally, the RuvA-RuvB-RuvC complex processes Holliday junction (HJ) DNA during genetic recombination and DNA repair, while the RuvA-RuvB complex plays an important role in the rescue of blocked DNA replication forks via replication fork reversal (RFR). RuvA specifically binds to HJ cruciform DNA, conferring on it an open structure. The RuvB hexamer acts as an ATP-dependent pump, pulling dsDNA into and through the RuvAB complex. RuvB forms 2 homohexamers on either side of HJ DNA bound by 1 or 2 RuvA tetramers; 4 subunits per hexamer contact DNA at a time. Coordinated motions by a converter formed by DNA-disengaged RuvB subunits stimulates ATP hydrolysis and nucleotide exchange. Immobilization of the converter enables RuvB to convert the ATP-contained energy into a lever motion, pulling 2 nucleotides of DNA out of the RuvA tetramer per ATP hydrolyzed, thus driving DNA branch migration. The RuvB motors rotate together with the DNA substrate, which together with the progressing nucleotide cycle form the mechanistic basis for DNA recombination by continuous HJ branch migration. Branch migration allows RuvC to scan DNA until it finds its consensus sequence, where it cleaves and resolves cruciform DNA. This chain is Holliday junction branch migration complex subunit RuvB, found in Flavobacterium johnsoniae (strain ATCC 17061 / DSM 2064 / JCM 8514 / BCRC 14874 / CCUG 350202 / NBRC 14942 / NCIMB 11054 / UW101) (Cytophaga johnsonae).